A 273-amino-acid polypeptide reads, in one-letter code: tRNA pseudouridine synthase B (273 aa).

The active-site Nucleophile is aspartate 38.

This sequence belongs to the pseudouridine synthase TruB family. Type 1 subfamily.

It catalyses the reaction uridine(55) in tRNA = pseudouridine(55) in tRNA. Functionally, responsible for synthesis of pseudouridine from uracil-55 in the psi GC loop of transfer RNAs. The protein is tRNA pseudouridine synthase B of Sulfurimonas denitrificans (strain ATCC 33889 / DSM 1251) (Thiomicrospira denitrificans (strain ATCC 33889 / DSM 1251)).